A 350-amino-acid chain; its full sequence is 2-oxoglutarate and iron-dependent oxygenase domain-containing protein 2 (350 aa).

The region spanning 215 to 309 is the Fe2OG dioxygenase domain; the sequence is DSHRAFVVKY…RWNLVVWLRA (95 aa). Fe cation-binding residues include His-235, Asp-237, and His-290. Arg-300 is a binding site for 2-oxoglutarate.

It belongs to the OGFOD2 family. Fe(2+) serves as cofactor. It depends on L-ascorbate as a cofactor.

The polypeptide is 2-oxoglutarate and iron-dependent oxygenase domain-containing protein 2 (OGFOD2) (Homo sapiens (Human)).